We begin with the raw amino-acid sequence, 414 residues long: Secernin-1 (414 aa).

This sequence belongs to the peptidase C69 family. Secernin subfamily.

It localises to the cytoplasm. Functionally, regulates exocytosis in mast cells. Increases both the extent of secretion and the sensitivity of mast cells to stimulation with calcium. This is Secernin-1 (Scrn1) from Mus musculus (Mouse).